Consider the following 161-residue polypeptide: Phosphopantetheine adenylyltransferase (161 aa).

T10 contacts substrate. ATP contacts are provided by residues T10 to F11 and H18. K42, M74, and R88 together coordinate substrate. ATP-binding positions include G89 to R91, E99, and L124 to S130.

It belongs to the bacterial CoaD family. Homohexamer. Mg(2+) serves as cofactor.

It is found in the cytoplasm. The catalysed reaction is (R)-4'-phosphopantetheine + ATP + H(+) = 3'-dephospho-CoA + diphosphate. Its pathway is cofactor biosynthesis; coenzyme A biosynthesis; CoA from (R)-pantothenate: step 4/5. Reversibly transfers an adenylyl group from ATP to 4'-phosphopantetheine, yielding dephospho-CoA (dPCoA) and pyrophosphate. In Proteus mirabilis (strain HI4320), this protein is Phosphopantetheine adenylyltransferase.